A 166-amino-acid chain; its full sequence is Ureidoglycolate lyase (166 aa).

The protein belongs to the ureidoglycolate lyase family. Homodimer. Requires Ni(2+) as cofactor.

The catalysed reaction is (S)-ureidoglycolate = urea + glyoxylate. It functions in the pathway nitrogen metabolism; (S)-allantoin degradation. Catalyzes the catabolism of the allantoin degradation intermediate (S)-ureidoglycolate, generating urea and glyoxylate. Involved in the utilization of allantoin as nitrogen source. This chain is Ureidoglycolate lyase, found in Rhizobium etli (strain ATCC 51251 / DSM 11541 / JCM 21823 / NBRC 15573 / CFN 42).